The chain runs to 541 residues: Chaperonin GroEL 2 (541 aa).

Residues Thr29–Pro32, Asp86–Thr90, Gly413, and Asp492 contribute to the ATP site.

The protein belongs to the chaperonin (HSP60) family. As to quaternary structure, forms a cylinder of 14 subunits composed of two heptameric rings stacked back-to-back. Interacts with the co-chaperonin GroES.

It localises to the cytoplasm. It carries out the reaction ATP + H2O + a folded polypeptide = ADP + phosphate + an unfolded polypeptide.. Functionally, together with its co-chaperonin GroES, plays an essential role in assisting protein folding. The GroEL-GroES system forms a nano-cage that allows encapsulation of the non-native substrate proteins and provides a physical environment optimized to promote and accelerate protein folding. The protein is Chaperonin GroEL 2 of Nocardia farcinica (strain IFM 10152).